A 372-amino-acid chain; its full sequence is Methenyltetrahydrofolate synthase domain-containing protein (372 aa).

The segment covering 246 to 258 (KQAGKDVTLRDEP) has biased composition (basic and acidic residues). The disordered stretch occupies residues 246 to 289 (KQAGKDVTLRDEPGSQQPAPGPIRRPQDRPQTGSRGGSRSPLQG). The RRM domain maps to 296-369 (ATVCVGNLPF…NALRVSLGQQ (74 aa)).

This Mus musculus (Mouse) protein is Methenyltetrahydrofolate synthase domain-containing protein (Mthfsd).